Reading from the N-terminus, the 419-residue chain is CinA-like protein (419 aa).

Belongs to the CinA family.

The polypeptide is CinA-like protein (Picosynechococcus sp. (strain ATCC 27264 / PCC 7002 / PR-6) (Agmenellum quadruplicatum)).